A 404-amino-acid polypeptide reads, in one-letter code: Cysteine desulfurase IscS (404 aa).

Pyridoxal 5'-phosphate-binding positions include 75–76, N155, Q183, and 203–205; these read AT and SAH. An N6-(pyridoxal phosphate)lysine modification is found at K206. T243 is a binding site for pyridoxal 5'-phosphate. The Cysteine persulfide intermediate role is filled by C328. Position 328 (C328) interacts with [2Fe-2S] cluster.

This sequence belongs to the class-V pyridoxal-phosphate-dependent aminotransferase family. NifS/IscS subfamily. As to quaternary structure, homodimer. Forms a heterotetramer with IscU, interacts with other sulfur acceptors. Requires pyridoxal 5'-phosphate as cofactor.

It is found in the cytoplasm. The enzyme catalyses (sulfur carrier)-H + L-cysteine = (sulfur carrier)-SH + L-alanine. Its pathway is cofactor biosynthesis; iron-sulfur cluster biosynthesis. Master enzyme that delivers sulfur to a number of partners involved in Fe-S cluster assembly, tRNA modification or cofactor biosynthesis. Catalyzes the removal of elemental sulfur atoms from cysteine to produce alanine. Functions as a sulfur delivery protein for Fe-S cluster synthesis onto IscU, an Fe-S scaffold assembly protein, as well as other S acceptor proteins. The protein is Cysteine desulfurase IscS of Vibrio cholerae serotype O1 (strain ATCC 39541 / Classical Ogawa 395 / O395).